A 266-amino-acid polypeptide reads, in one-letter code: Exosome complex component Rrp42 (266 aa).

The protein belongs to the RNase PH family. Rrp42 subfamily. Component of the archaeal exosome complex. Forms a hexameric ring-like arrangement composed of 3 Rrp41-Rrp42 heterodimers. The hexameric ring associates with a trimer of Rrp4 and/or Csl4 subunits.

The protein resides in the cytoplasm. Non-catalytic component of the exosome, which is a complex involved in RNA degradation. Contributes to the structuring of the Rrp41 active site. This chain is Exosome complex component Rrp42, found in Methanosarcina acetivorans (strain ATCC 35395 / DSM 2834 / JCM 12185 / C2A).